A 152-amino-acid polypeptide reads, in one-letter code: Superoxide dismutase [Cu-Zn] 2 (152 aa).

Cu cation is bound by residues His-45, His-47, and His-62. Cysteines 56 and 145 form a disulfide. Residues His-62, His-70, His-79, and Asp-82 each coordinate Zn(2+). His-119 is a Cu cation binding site.

This sequence belongs to the Cu-Zn superoxide dismutase family. As to quaternary structure, homodimer. Requires Cu cation as cofactor. It depends on Zn(2+) as a cofactor.

It localises to the cytoplasm. It carries out the reaction 2 superoxide + 2 H(+) = H2O2 + O2. In terms of biological role, destroys radicals which are normally produced within the cells and which are toxic to biological systems. This chain is Superoxide dismutase [Cu-Zn] 2 (SODCC2), found in Oryza sativa subsp. japonica (Rice).